Reading from the N-terminus, the 607-residue chain is CUB and zona pellucida-like domain-containing protein 1 (607 aa).

Residues methionine 1–alanine 19 form the signal peptide. The Lumenal segment spans residues glutamine 20 to histidine 568. Asparagine 22 is a glycosylation site (N-linked (GlcNAc...) asparagine). A disulfide bridge links cysteine 32 with cysteine 58. CUB domains follow at residues cysteine 32–serine 146 and cysteine 154–threonine 265. The N-linked (GlcNAc...) asparagine glycan is linked to asparagine 67. Disulfide bonds link cysteine 85/cysteine 107 and cysteine 154/cysteine 180. N-linked (GlcNAc...) asparagine glycosylation occurs at asparagine 195. Cysteine 207 and cysteine 229 are joined by a disulfide. The 244-residue stretch at serine 276–arginine 519 folds into the ZP domain. N-linked (GlcNAc...) asparagine glycosylation is present at asparagine 419. Cysteine 442 and cysteine 498 form a disulfide bridge. A helical transmembrane segment spans residues leucine 569–valine 589. The Cytoplasmic segment spans residues arginine 590 to tyrosine 607.

As to expression, expressed predominantly in epithelium of uterus and oviduct.

The protein resides in the zymogen granule membrane. In terms of biological role, localized to zymogen granules, where it functions in trypsinogen activation. May indirectly regulate cell motility, cell-cell and cell/extracellular matrix interactions. The chain is CUB and zona pellucida-like domain-containing protein 1 from Rattus norvegicus (Rat).